A 25-amino-acid polypeptide reads, in one-letter code: Neuromedin-U-25 (25 aa).

N25 carries the post-translational modification Asparagine amide.

Belongs to the NmU family.

It is found in the secreted. Functionally, stimulates uterine smooth muscle contraction and causes selective vasoconstriction. This chain is Neuromedin-U-25 (NMU), found in Sus scrofa (Pig).